We begin with the raw amino-acid sequence, 114 residues long: Photosystem II reaction center Psb28 protein (114 aa).

This sequence belongs to the Psb28 family. Part of the photosystem II complex.

The protein localises to the cellular thylakoid membrane. In Rippkaea orientalis (strain PCC 8801 / RF-1) (Cyanothece sp. (strain PCC 8801)), this protein is Photosystem II reaction center Psb28 protein.